Here is a 363-residue protein sequence, read N- to C-terminus: Wortmanamides biosynthesis cluster protein C (363 aa).

Transmembrane regions (helical) follow at residues 15–35 (FVTLLIFTPLGIVVTALRFVA), 48–68 (WLAVIATIFFILTNLAGLMAI), 95–115 (IAGLFFYFAQTLSVKLSILAF), 129–149 (ICIYLLAAAQTILFIAFCIFQ), 175–195 (ILGGELPNSLVDFAMVILAMI), 210–230 (VTVLFGLGFVVGIIGFVKIAV), and 237–257 (LYAFSMIALWTGVQMFTALLC). The segment at 293–312 (SSSKNSRKHGPYDSDQSPGP) is disordered. Asn-321 carries an N-linked (GlcNAc...) asparagine glycan. The disordered stretch occupies residues 344-363 (SPITHPQAYSKQTTRQFDVV).

This sequence belongs to the SAT4 family.

The protein localises to the membrane. It participates in secondary metabolite biosynthesis. Its function is as follows. Part of the gene cluster that mediates the biosynthesis of wortmanamides A and B, reduced long-chain polyketides amidated with a specific omega-amino acid, 5-aminopentanoic acid (5PA). The PKS modules of TwmB are involved in the synthesis of the polyketide backbone, whereas the non-canonical C domain of TwmB is a bonafide condensation domain that specifically selects 5PA and catalyzes amidation to release polyketide chain. The C domain clearly prefers C16 and C18 fatty acyl substrates, which is consistent with simultaneous formation of both octaketide and nonaketide acyl amides wortmanamides A and B. Because TwmB lacks a designated enoylreductase (ER) domain, the required activity is provided the enoyl reductase TwmE. The roles of the remaining enzymes have still to be clarified. The protein is Wortmanamides biosynthesis cluster protein C of Talaromyces wortmannii (Penicillium wortmannii).